Here is a 357-residue protein sequence, read N- to C-terminus: Probable cinnamyl alcohol dehydrogenase 2 (357 aa).

Cys-47 serves as a coordination point for Zn(2+). Ser-49 contacts NADP(+). The Zn(2+) site is built by His-69, Glu-70, Cys-100, Cys-103, Cys-106, Cys-114, and Cys-163. Residues Thr-167, Gly-188–Gly-193, Ser-211–Lys-216, Thr-251, Gly-275, and Ser-298–Ile-300 each bind NADP(+).

Belongs to the zinc-containing alcohol dehydrogenase family. As to quaternary structure, homodimer. The cofactor is Zn(2+).

It carries out the reaction (E)-cinnamyl alcohol + NADP(+) = (E)-cinnamaldehyde + NADPH + H(+). The catalysed reaction is (E)-coniferol + NADP(+) = (E)-coniferaldehyde + NADPH + H(+). It catalyses the reaction (E)-sinapyl alcohol + NADP(+) = (E)-sinapaldehyde + NADPH + H(+). The enzyme catalyses (E)-4-coumaroyl alcohol + NADP(+) = (E)-4-coumaraldehyde + NADPH + H(+). It carries out the reaction (E)-caffeyl alcohol + NADP(+) = (E)-caffeyl aldehyde + NADPH + H(+). It participates in aromatic compound metabolism; phenylpropanoid biosynthesis. Its function is as follows. Involved in lignin biosynthesis. Catalyzes the final step specific for the production of lignin monomers. Catalyzes the NADPH-dependent reduction of coniferaldehyde, 5-hydroxyconiferaldehyde, sinapaldehyde, 4-coumaraldehyde and caffeyl aldehyde to their respective alcohols. The sequence is that of Probable cinnamyl alcohol dehydrogenase 2 (CAD2) from Picea abies (Norway spruce).